The primary structure comprises 115 residues: Evasin P1182 (115 aa).

The N-terminal stretch at 1 to 26 is a signal peptide; that stretch reads MALNWSFRVIFVSTMWCALLKFATLG. Cystine bridges form between Cys38–Cys58, Cys54–Cys94, Cys70–Cys99, and Cys89–Cys108. N-linked (GlcNAc...) asparagine glycosylation is found at Asn45, Asn72, and Asn103.

The protein localises to the secreted. Functionally, salivary chemokine-binding protein which binds to host chemokines CCL2, CCL3, CCL4, CCL8 and CCL18. The chain is Evasin P1182 from Amblyomma maculatum (Gulf Coast tick).